Here is a 477-residue protein sequence, read N- to C-terminus: Delayed-rectifier potassium channel regulatory subunit KCNS2 (477 aa).

The Cytoplasmic segment spans residues 1-184 (MTRQSLWDLS…LALDNPGYSV (184 aa)). The chain crosses the membrane as a helical span at residues 185–206 (LSRVFSVLSILVVLGSIITMCL). At 207-225 (NSLPDFQIPDSQGNPGEDP) the chain is on the extracellular side. The chain crosses the membrane as a helical span at residues 226-248 (RFEIVEHFGIAWFTFELVARFAV). The Cytoplasmic portion of the chain corresponds to 249–259 (APDFLKFFKNA). Residues 260–280 (LNLIDLMSIVPFYITLVVNLV) form a helical membrane-spanning segment. At 281–290 (VESSPTLANL) the chain is on the extracellular side. Residues 291–311 (GRVAQVLRLMRIFRILKLARH) form a helical; Voltage-sensor membrane-spanning segment. Residues 312–326 (STGLRSLGATLKYSY) lie on the Cytoplasmic side of the membrane. The helical transmembrane segment at 327–348 (KEVGLLLLYLSVGISIFSVVAY) threads the bilayer. Residues 349–361 (TIEKEENEGLATI) lie on the Extracellular side of the membrane. The segment at residues 362-373 (PACWWWATVSMT) is an intramembrane region (helical). A Selectivity filter motif is present at residues 374–379 (TVGYGD). Residues 374–381 (TVGYGDVV) lie within the membrane without spanning it. The Extracellular portion of the chain corresponds to 382–388 (PGTTAGK). A helical membrane pass occupies residues 389 to 417 (LTASACILAGILVVVLPITLIFNKFSHFY). At 418 to 477 (RRQKQLESAMRSCDFGDGMKEVPSVNLRDYYAHKVKSLMASLTNMSRSSPSELSLDDSLH) the chain is on the cytoplasmic side.

This sequence belongs to the potassium channel family. S (TC 1.A.1.2) subfamily. Kv9.2/KCNS2 sub-subfamily. As to quaternary structure, heterotetramer with KCNB1 and KCNB2. Does not form homomultimers. As to expression, detected in brain, lung and in pulmonary arteries.

It localises to the cell membrane. Potassium channel regulatory subunit that modulate the delayed rectifier voltage-gated potassium channel activity of KCNB1 and KCNB2 by altering their kinetics, expression levels, and shifting the half-inactivation potential to more polarized values. While it does not form functional channels on its own, it can form functional heterotetrameric channels with KCNB1 and KCNB2. Each regulatory subunit has unique regulatory properties that can lead to extensive inhibition, significant changes in kinetics, and/or substantial shifts in the voltage dependencies of the inactivation process. The chain is Delayed-rectifier potassium channel regulatory subunit KCNS2 from Rattus norvegicus (Rat).